We begin with the raw amino-acid sequence, 271 residues long: Probable iron transport system membrane protein HI_0359 (271 aa).

The next 8 helical transmembrane spans lie at 17–37 (ALLT…YLVL), 55–75 (IVLA…SGIF), 93–113 (TAMG…FTKI), 131–151 (SHQE…LIVF), 168–188 (VAGL…ALTI), 194–214 (VVGV…ALTL), 221–241 (MLWV…ILSY), and 245–265 (ASTG…ALAY).

Belongs to the ABC-3 integral membrane protein family.

It is found in the cell inner membrane. In terms of biological role, part of an ATP-driven transport system HI_0359/HI_0360/HI_0361/HI_0362 for iron. This Haemophilus influenzae (strain ATCC 51907 / DSM 11121 / KW20 / Rd) protein is Probable iron transport system membrane protein HI_0359.